We begin with the raw amino-acid sequence, 110 residues long: uncharacterized protein (110 aa).

Functionally, may play a regulatory role in sulfomenaquinone (SMK) biosynthesis. This is an uncharacterized protein from Mycobacterium bovis (strain ATCC BAA-935 / AF2122/97).